We begin with the raw amino-acid sequence, 258 residues long: Chaperone protein caf1M (258 aa).

The signal sequence occupies residues 1-20 (MILNRLSTLGIITFGMLSFA). Cys-121 and Cys-160 are disulfide-bonded.

It belongs to the periplasmic pilus chaperone family.

It localises to the periplasm. Its function is as follows. Has a stimulatory role for the envelope antigen F1 secretion. It seems to interact with the subunit polypeptide and to prevent it from digestion by a protease. This is Chaperone protein caf1M (caf1M) from Yersinia pestis.